Consider the following 788-residue polypeptide: Patatin-like phospholipase domain-containing protein DEHA2B04136g (788 aa).

The helical transmembrane segment at 136-156 (WPILIFISCWISLLCFMYIIV) threads the bilayer. The region spanning 311–503 (LCLSGGACFT…RTDIPIDALN (193 aa)) is the PNPLA domain. The GXSXG motif lies at 342–346 (GTSGG). Ser344 (nucleophile) is an active-site residue. The active-site Proton acceptor is Asp490. The segment covering 662 to 672 (ANFNTLTSSDS) has biased composition (polar residues). A disordered region spans residues 662–771 (ANFNTLTSSD…DTGSRFLKSF (110 aa)). Composition is skewed to acidic residues over residues 690–705 (MFDD…DDEV) and 723–749 (EDGD…DEAN).

This sequence belongs to the PLPL family.

It localises to the membrane. Its function is as follows. Probable lipid hydrolase. This chain is Patatin-like phospholipase domain-containing protein DEHA2B04136g, found in Debaryomyces hansenii (strain ATCC 36239 / CBS 767 / BCRC 21394 / JCM 1990 / NBRC 0083 / IGC 2968) (Yeast).